We begin with the raw amino-acid sequence, 450 residues long: Phosphoglucosamine mutase (450 aa).

The Phosphoserine intermediate role is filled by Ser-101. Ser-101, Asp-240, Asp-242, and Asp-244 together coordinate Mg(2+). Ser-101 is subject to Phosphoserine.

The protein belongs to the phosphohexose mutase family. The cofactor is Mg(2+). Activated by phosphorylation.

It carries out the reaction alpha-D-glucosamine 1-phosphate = D-glucosamine 6-phosphate. Functionally, catalyzes the conversion of glucosamine-6-phosphate to glucosamine-1-phosphate. In Streptococcus pneumoniae (strain Hungary19A-6), this protein is Phosphoglucosamine mutase.